A 459-amino-acid polypeptide reads, in one-letter code: Light-independent protochlorophyllide reductase subunit N (459 aa).

[4Fe-4S] cluster-binding residues include Cys22, Cys47, and Cys107.

It belongs to the BchN/ChlN family. Protochlorophyllide reductase is composed of three subunits; ChlL, ChlN and ChlB. Forms a heterotetramer of two ChlB and two ChlN subunits. [4Fe-4S] cluster serves as cofactor.

The protein localises to the plastid. Its subcellular location is the chloroplast. It catalyses the reaction chlorophyllide a + oxidized 2[4Fe-4S]-[ferredoxin] + 2 ADP + 2 phosphate = protochlorophyllide a + reduced 2[4Fe-4S]-[ferredoxin] + 2 ATP + 2 H2O. Its pathway is porphyrin-containing compound metabolism; chlorophyll biosynthesis (light-independent). In terms of biological role, component of the dark-operative protochlorophyllide reductase (DPOR) that uses Mg-ATP and reduced ferredoxin to reduce ring D of protochlorophyllide (Pchlide) to form chlorophyllide a (Chlide). This reaction is light-independent. The NB-protein (ChlN-ChlB) is the catalytic component of the complex. The sequence is that of Light-independent protochlorophyllide reductase subunit N from Pinus contorta (Shore pine).